Reading from the N-terminus, the 228-residue chain is uncharacterized protein (228 aa).

The next 5 membrane-spanning stretches (helical) occupy residues 14-34, 42-62, 130-150, 156-176, and 192-212; these read HTIS…MLLV, VALF…AITL, FIFS…LVGS, FSFD…VLFM, and IVIA…LIAL.

The protein belongs to the AzlC family.

Its subcellular location is the cell membrane. This is an uncharacterized protein from Helicobacter pylori (strain ATCC 700392 / 26695) (Campylobacter pylori).